The sequence spans 204 residues: Lymphotoxin-alpha (204 aa).

A signal peptide spans 1–33 (MTPPGRLYLLRVRSAPVLLLLGLLLGLPPGAQG). The THD domain maps to 62–204 (PAAHLIGDPS…SSVFFGAFAL (143 aa)). A glycan (N-linked (GlcNAc...) asparagine) is linked at asparagine 95. The cysteines at positions 119 and 155 are disulfide-linked.

Belongs to the tumor necrosis factor family. In terms of assembly, homotrimer, and heterotrimer of either two LTB and one LTA subunits or (less prevalent) two LTA and one LTB subunits. Interacts with TNFRSF14.

Its subcellular location is the secreted. The protein resides in the membrane. Cytokine that in its homotrimeric form binds to TNFRSF1A/TNFR1, TNFRSF1B/TNFBR and TNFRSF14/HVEM. In its heterotrimeric form with LTB binds to TNFRSF3/LTBR. Lymphotoxin is produced by lymphocytes and is cytotoxic for a wide range of tumor cells in vitro and in vivo. The chain is Lymphotoxin-alpha (LTA) from Canis lupus familiaris (Dog).